The following is a 438-amino-acid chain: Forkhead box protein J1 (438 aa).

Positions 123–217 (KPPYSYATLI…MNGAMKKRRL (95 aa)) form a DNA-binding region, fork-head.

The protein belongs to the FOXJ1 family.

Its subcellular location is the nucleus. Its function is as follows. Key transcription factor required for motile ciliogenesis. Activates genes essential for motile cilia formation and function. In Xenopus tropicalis (Western clawed frog), this protein is Forkhead box protein J1.